Here is a 183-residue protein sequence, read N- to C-terminus: Hypoxanthine-guanine-xanthine phosphoribosyltransferase (183 aa).

GMP is bound by residues 102 to 110 (EDIIDTGLT), Lys-134, and Asp-163. Asp-106 acts as the Proton acceptor in catalysis. Asp-163 contributes to the Mg(2+) binding site.

In terms of assembly, homodimer. The cofactor is Mg(2+).

Its subcellular location is the cytoplasm. The catalysed reaction is IMP + diphosphate = hypoxanthine + 5-phospho-alpha-D-ribose 1-diphosphate. The enzyme catalyses GMP + diphosphate = guanine + 5-phospho-alpha-D-ribose 1-diphosphate. It carries out the reaction XMP + diphosphate = xanthine + 5-phospho-alpha-D-ribose 1-diphosphate. Its pathway is purine metabolism; GMP biosynthesis via salvage pathway; GMP from guanine: step 1/1. It functions in the pathway purine metabolism; IMP biosynthesis via salvage pathway; IMP from hypoxanthine: step 1/1. The protein operates within purine metabolism; XMP biosynthesis via salvage pathway; XMP from xanthine: step 1/1. Its function is as follows. Essential in nucleic acid metabolism of T.foetus because the parasite is unable to synthesize purine nucleotides de novo and relies on the HGXPRTase activities for its purine requirements by salvaging purine bases from the host. Works with guanine, hypoxanthine and xanthine. The chain is Hypoxanthine-guanine-xanthine phosphoribosyltransferase (HPT) from Tritrichomonas foetus (Trichomonas foetus).